Here is a 431-residue protein sequence, read N- to C-terminus: 23S rRNA (uracil(1939)-C(5))-methyltransferase RlmD (431 aa).

The region spanning 10 to 68 (RVTTRQIITVKVNDLDSFGQGVARHNGKALFIPGLLPEESAEVIITEDKKQFARARVSR) is the TRAM domain. The [4Fe-4S] cluster site is built by cysteine 81, cysteine 87, cysteine 90, and cysteine 161. Residues glutamine 264, phenylalanine 293, asparagine 298, glutamate 314, asparagine 341, and aspartate 362 each coordinate S-adenosyl-L-methionine. Cysteine 388 serves as the catalytic Nucleophile.

Belongs to the class I-like SAM-binding methyltransferase superfamily. RNA M5U methyltransferase family. RlmD subfamily.

The catalysed reaction is uridine(1939) in 23S rRNA + S-adenosyl-L-methionine = 5-methyluridine(1939) in 23S rRNA + S-adenosyl-L-homocysteine + H(+). Functionally, catalyzes the formation of 5-methyl-uridine at position 1939 (m5U1939) in 23S rRNA. The chain is 23S rRNA (uracil(1939)-C(5))-methyltransferase RlmD from Salmonella paratyphi A (strain ATCC 9150 / SARB42).